The primary structure comprises 510 residues: 3,4-dihydroxyphenylacetaldehyde synthase (510 aa).

Residue asparagine 192 is part of the active site. Lysine 303 is subject to N6-(pyridoxal phosphate)lysine.

This sequence belongs to the group II decarboxylase family. Requires pyridoxal 5'-phosphate as cofactor.

It carries out the reaction L-dopa + O2 + H2O + H(+) = 3,4-dihydroxyphenylacetaldehyde + H2O2 + NH4(+) + CO2. Its function is as follows. Catalyzes the decarboxylation-oxidative deamination of L-3,4-dihydroxyphenylalanine (L-DOPA) to 3,4-dihydroxylphenylacetaldehyde (DHPAA). Involved in cuticle development. Probably responsible for the protein cross-linking during the development of flexible cuticles. The sequence is that of 3,4-dihydroxyphenylacetaldehyde synthase (amd) from Drosophila melanogaster (Fruit fly).